The chain runs to 140 residues: Large ribosomal subunit protein bL17 (140 aa).

This sequence belongs to the bacterial ribosomal protein bL17 family. As to quaternary structure, part of the 50S ribosomal subunit. Contacts protein L32.

This is Large ribosomal subunit protein bL17 from Rhizobium etli (strain CIAT 652).